A 207-amino-acid polypeptide reads, in one-letter code: Probable GTP-binding protein EngB (207 aa).

The EngB-type G domain maps to 24–199 (GGYEVAFAGR…RGIVGGWLGL (176 aa)). Residues 32-39 (GRSNAGKS), 59-63 (GRTQQ), 77-80 (DLPG), 144-147 (TKAD), and 178-180 (YSG) each bind GTP. Serine 39 and threonine 61 together coordinate Mg(2+).

The protein belongs to the TRAFAC class TrmE-Era-EngA-EngB-Septin-like GTPase superfamily. EngB GTPase family. Mg(2+) serves as cofactor.

In terms of biological role, necessary for normal cell division and for the maintenance of normal septation. The protein is Probable GTP-binding protein EngB of Xanthomonas oryzae pv. oryzae (strain MAFF 311018).